We begin with the raw amino-acid sequence, 81 residues long: MTDLFAQADQTLDALGLRCPEPVMMVRKTVRHMDNGETLLIIADDPATTRDIPGFCRFMEHTLVAQETDTAPYRYLLRKGV.

Cys-19 acts as the Cysteine persulfide intermediate in catalysis.

The protein belongs to the sulfur carrier protein TusA family. In terms of assembly, interacts with IscS.

The protein localises to the cytoplasm. The protein operates within tRNA modification. Sulfur carrier protein involved in sulfur trafficking in the cell. Part of a sulfur-relay system required for 2-thiolation during synthesis of 2-thiouridine of the modified wobble base 5-methylaminomethyl-2-thiouridine (mnm(5)s(2)U) in tRNA. Interacts with IscS and stimulates its cysteine desulfurase activity. Accepts an activated sulfur from IscS, which is then transferred to TusD, and thus determines the direction of sulfur flow from IscS to 2-thiouridine formation. Also appears to be involved in sulfur transfer for the biosynthesis of molybdopterin. The chain is Sulfur carrier protein TusA from Serratia proteamaculans (strain 568).